We begin with the raw amino-acid sequence, 400 residues long: Octopine dehydrogenase (400 aa).

Residues 10-13 and 35-38 each bind NADH; these read GGNG and FADE. 2 residues coordinate pyruvate: Gln-118 and Thr-143. Gln-118 lines the substrate pocket. NAD(+) is bound at residue Cys-148. Met-206 is a binding site for L-arginine. His-212 contacts pyruvate. His-212 is an active-site residue. Arg-324 serves as a coordination point for NAD(+).

This sequence belongs to the lysopine/nopaline/octopine/opine/vitopine dehydrogenases family.

It carries out the reaction D-octopine + NAD(+) + H2O = L-arginine + pyruvate + NADH + H(+). Catalyzes the reverse reaction of octopine dehydrogenation. Acts on L-arginine in preference to other substrates. This is Octopine dehydrogenase from Mizuhopecten yessoensis (Japanese scallop).